The primary structure comprises 305 residues: UDP-3-O-acyl-N-acetylglucosamine deacetylase (305 aa).

3 residues coordinate Zn(2+): His-79, His-238, and Asp-242. Residue His-265 is the Proton donor of the active site.

Belongs to the LpxC family. It depends on Zn(2+) as a cofactor.

The catalysed reaction is a UDP-3-O-[(3R)-3-hydroxyacyl]-N-acetyl-alpha-D-glucosamine + H2O = a UDP-3-O-[(3R)-3-hydroxyacyl]-alpha-D-glucosamine + acetate. It participates in glycolipid biosynthesis; lipid IV(A) biosynthesis; lipid IV(A) from (3R)-3-hydroxytetradecanoyl-[acyl-carrier-protein] and UDP-N-acetyl-alpha-D-glucosamine: step 2/6. In terms of biological role, catalyzes the hydrolysis of UDP-3-O-myristoyl-N-acetylglucosamine to form UDP-3-O-myristoylglucosamine and acetate, the committed step in lipid A biosynthesis. This Haemophilus influenzae (strain PittEE) protein is UDP-3-O-acyl-N-acetylglucosamine deacetylase.